Consider the following 304-residue polypeptide: Olfactory receptor 4K13 (304 aa).

The Extracellular segment spans residues 1-25 (MERANHSVVSEFILLGLSKSQNLQI). The N-linked (GlcNAc...) asparagine glycan is linked to Asn-5. Residues 26-49 (LFFLGFSVVFVGIVLGNLLILVTV) traverse the membrane as a helical segment. At 50–57 (TFDSLLHT) the chain is on the cytoplasmic side. The helical transmembrane segment at 58–79 (PMYFLLSNLSCIDMILASFATP) threads the bilayer. Over 80–100 (KMIVDFLRERKTISWWGCYSQ) the chain is Extracellular. A disulfide bridge links Cys-97 with Cys-189. Residues 101-120 (MFFMHLLGGSEMMLLVAMAI) traverse the membrane as a helical segment. The Cytoplasmic portion of the chain corresponds to 121-139 (DRYVAICKPLHYMTIMSPR). The chain crosses the membrane as a helical span at residues 140-158 (VLTGLLLSSYAVGFVHSSS). The Extracellular segment spans residues 159–195 (QMAFMLTLPFCGPNVIDSFFCDLPLVIKLACKDTYIL). A helical membrane pass occupies residues 196–219 (QLLVIADSGLLSLVCFLLLLVSYG). The Cytoplasmic portion of the chain corresponds to 220–235 (VIIFSVRYRAASRSSK). Residues 236-258 (AFSTLSAHITVVTLFFAPCVFIY) form a helical membrane-spanning segment. At 259-269 (VWPFSRYSVDK) the chain is on the extracellular side. A helical transmembrane segment spans residues 270 to 289 (ILSVFYTIFTPLLNPIIYTL). The Cytoplasmic segment spans residues 290-304 (RNQEVKAAIKKRLCI).

This sequence belongs to the G-protein coupled receptor 1 family.

It localises to the cell membrane. Its function is as follows. Odorant receptor. The protein is Olfactory receptor 4K13 (OR4K13) of Homo sapiens (Human).